Reading from the N-terminus, the 178-residue chain is Glutamyl-tRNA(Gln) amidotransferase subunit C, mitochondrial (178 aa).

A mitochondrion-targeting transit peptide spans 1 to 31 (MFRHIFTLGPRSISAITVRSRRALSSTAKPV). The segment at 26–67 (STAKPVSAPVTSDDRPNLDVKHLKHPTKVPQQPHKSDIDRRQ) is disordered. The segment covering 37 to 46 (SDDRPNLDVK) has biased composition (basic and acidic residues).

The protein belongs to the GatC family. As to quaternary structure, subunit of the heterotrimeric GatCAB amidotransferase (AdT) complex, composed of A, B and C subunits.

The protein localises to the mitochondrion. It catalyses the reaction L-glutamyl-tRNA(Gln) + L-glutamine + ATP + H2O = L-glutaminyl-tRNA(Gln) + L-glutamate + ADP + phosphate + H(+). Allows the formation of correctly charged Gln-tRNA(Gln) through the transamidation of misacylated Glu-tRNA(Gln) in the mitochondria. The reaction takes place in the presence of glutamine and ATP through an activated gamma-phospho-Glu-tRNA(Gln). The chain is Glutamyl-tRNA(Gln) amidotransferase subunit C, mitochondrial from Aedes aegypti (Yellowfever mosquito).